The sequence spans 89 residues: Small ribosomal subunit protein uS15 (89 aa).

This sequence belongs to the universal ribosomal protein uS15 family. Part of the 30S ribosomal subunit. Forms a bridge to the 50S subunit in the 70S ribosome, contacting the 23S rRNA.

Its function is as follows. One of the primary rRNA binding proteins, it binds directly to 16S rRNA where it helps nucleate assembly of the platform of the 30S subunit by binding and bridging several RNA helices of the 16S rRNA. Functionally, forms an intersubunit bridge (bridge B4) with the 23S rRNA of the 50S subunit in the ribosome. This chain is Small ribosomal subunit protein uS15, found in Acinetobacter baumannii (strain AB307-0294).